The primary structure comprises 391 residues: Chaperone protein DnaJ (391 aa).

The J domain maps to 2-67 (DYYDVLGVSK…QKRESYDRYG (66 aa)). The CR-type zinc finger occupies 148–226 (GVKKELLVSG…CRGQGRIKDK (79 aa)). 8 residues coordinate Zn(2+): C161, C164, C178, C181, C200, C203, C214, and C217. CXXCXGXG motif repeat units lie at residues 161 to 168 (CETCSGSG), 178 to 185 (CDRCKGSG), 200 to 207 (CPECGGEG), and 214 to 221 (CSSCRGQG).

This sequence belongs to the DnaJ family. Homodimer. Zn(2+) serves as cofactor.

The protein resides in the cytoplasm. In terms of biological role, participates actively in the response to hyperosmotic and heat shock by preventing the aggregation of stress-denatured proteins and by disaggregating proteins, also in an autonomous, DnaK-independent fashion. Unfolded proteins bind initially to DnaJ; upon interaction with the DnaJ-bound protein, DnaK hydrolyzes its bound ATP, resulting in the formation of a stable complex. GrpE releases ADP from DnaK; ATP binding to DnaK triggers the release of the substrate protein, thus completing the reaction cycle. Several rounds of ATP-dependent interactions between DnaJ, DnaK and GrpE are required for fully efficient folding. Also involved, together with DnaK and GrpE, in the DNA replication of plasmids through activation of initiation proteins. The sequence is that of Chaperone protein DnaJ from Chlamydia abortus (strain DSM 27085 / S26/3) (Chlamydophila abortus).